A 726-amino-acid chain; its full sequence is MIYSLKHLNKYLPEIKLDQSVTKALESLGFEVEFFEKFSSSKGLLFAKVLNVFDNPNSTKLQVVELDTKLGELTIQTTNKVLSKGDLTICYPVGSSYQGKEFQEVTMQGYKSQGMLASFSEIGYDNSLLTDKDQILVLPKNFASLNDDASEKLELNDYIFELSITTNRNEINSYYFLAKELAAYYNTKFSCEFLDAKLKQSFESSFKFEGNFLDKNYSFTLLEAKGKVSTSFEEKLLLAKHKIDSKFNPAVNLTNLVLINLGIPIHVYDKAKLKSTKFSVGLYNGKVNLLGNKQVEVSDALAVFNGDKVVSLAATMGLEESKVDLQTSEFIFEMASFPSKLIRNNAKEIKMNSNASNLASKTITKYQVKLAHKFLFNYLKDLKLSNVVNDFELDKKVEINFDEEKLQRYSNGLPSSEFIKAFDKLKLLEFEFENQKIKVPLYRYDVSIFEDIIEELFRFYNYDNFKEIPYIQIPGELKADNKNFKEKLKALGYSEARTFTLVNEKDSKFDPLDLSDAIKLETFVSKEREFVRNSLAISLAEAVNNNKKKKINNVNLFEVGMVNANLFYACLATTDKSFLELKQDFVSFFDNLNLEFKKPKNQFLHPNYSAEIYLNDQKLGWIGKINPSFLDLDCLFVEFKYDLYFDDKFKKYEAPNLDVLKSIDLTFELNNNEHLQKYLDKINSVAKVFEIKEIDDFKKETSHNVSLRITAPSAEIDKLNSHFNKD.

In terms of domain architecture, tRNA-binding spans 38–150 (FSSSKGLLFA…NFASLNDDAS (113 aa)). In terms of domain architecture, B5 spans 394-467 (DKKVEINFDE…RFYNYDNFKE (74 aa)). Asp445, Asp451, Glu454, and Glu455 together coordinate Mg(2+).

This sequence belongs to the phenylalanyl-tRNA synthetase beta subunit family. Type 1 subfamily. In terms of assembly, tetramer of two alpha and two beta subunits. The cofactor is Mg(2+).

The protein resides in the cytoplasm. The catalysed reaction is tRNA(Phe) + L-phenylalanine + ATP = L-phenylalanyl-tRNA(Phe) + AMP + diphosphate + H(+). This Mycoplasmopsis synoviae (strain 53) (Mycoplasma synoviae) protein is Phenylalanine--tRNA ligase beta subunit.